The primary structure comprises 151 residues: Ribosome maturation factor RimP (151 aa).

It belongs to the RimP family.

Its subcellular location is the cytoplasm. Functionally, required for maturation of 30S ribosomal subunits. In Persephonella marina (strain DSM 14350 / EX-H1), this protein is Ribosome maturation factor RimP.